Reading from the N-terminus, the 225-residue chain is Endonuclease V (225 aa).

Aspartate 43 and aspartate 110 together coordinate Mg(2+).

It belongs to the endonuclease V family. It depends on Mg(2+) as a cofactor.

The protein localises to the cytoplasm. It catalyses the reaction Endonucleolytic cleavage at apurinic or apyrimidinic sites to products with a 5'-phosphate.. In terms of biological role, DNA repair enzyme involved in the repair of deaminated bases. Selectively cleaves double-stranded DNA at the second phosphodiester bond 3' to a deoxyinosine leaving behind the intact lesion on the nicked DNA. This Thermotoga sp. (strain RQ2) protein is Endonuclease V.